Reading from the N-terminus, the 120-residue chain is Ribosome-binding factor A (120 aa).

This sequence belongs to the RbfA family. Monomer. Binds 30S ribosomal subunits, but not 50S ribosomal subunits or 70S ribosomes.

It is found in the cytoplasm. In terms of biological role, one of several proteins that assist in the late maturation steps of the functional core of the 30S ribosomal subunit. Associates with free 30S ribosomal subunits (but not with 30S subunits that are part of 70S ribosomes or polysomes). Required for efficient processing of 16S rRNA. May interact with the 5'-terminal helix region of 16S rRNA. The chain is Ribosome-binding factor A from Clostridium botulinum (strain ATCC 19397 / Type A).